The chain runs to 269 residues: Lck-interacting transmembrane adapter 1 (269 aa).

Over methionine 1–serine 7 the chain is Extracellular. The helical; Signal-anchor for type III membrane protein transmembrane segment at alanine 8 to cysteine 28 threads the bilayer. S-palmitoyl cysteine attachment occurs at residues cysteine 28 and cysteine 31. Residues threonine 29–leucine 269 lie on the Cytoplasmic side of the membrane. The segment at serine 102–serine 133 is disordered. The segment covering arginine 115 to alanine 124 has biased composition (pro residues). A phosphotyrosine mark is found at tyrosine 137, tyrosine 175, and tyrosine 207. The interval tyrosine 137–valine 140 is interaction with GRB2. 2 interaction with CSK regions span residues tyrosine 175–isoleucine 178 and tyrosine 207–valine 210. Phosphotyrosine; by LYN or LCK occurs at positions 242 and 261. The segment at tyrosine 242 to isoleucine 245 is interaction with LCK and PIK3R1. The interval tyrosine 261–isoleucine 264 is interaction with LCK, PLCG2 and PIK3R1. Serine 263 is modified (phosphoserine).

When phosphorylated in response to TCR stimulation and/or CD4 costimulation, interacts with LCK, CSK, FYN, PTPN11/SHP2, GRB2, PIK3R1 and GRAP2. When phosphorylated in response to BCR activation, interacts with LYN, PIK3R1, PLCG2 and GRB2. Palmitoylation of Cys-28 and Cys-31 is required for raft targeting. In terms of processing, phosphorylated on tyrosines upon TCR activation and/or CD4 coreceptor stimulation, or upon BCR stimulation; which leads to the recruitment of SH2-containing proteins. In terms of tissue distribution, expressed in spleen and lung. Present in primary B-cells and peripheral T-cells (at protein level).

Its subcellular location is the cell membrane. Involved in BCR (B-cell antigen receptor)-mediated signaling in B-cells and TCR (T-cell antigen receptor)-mediated T-cell signaling in T-cells. In absence of TCR signaling, may be involved in CD4-mediated inhibition of T-cell activation. Couples activation of these receptors and their associated kinases with distal intracellular events such as calcium mobilization or MAPK activation through the recruitment of PLCG2, GRB2, GRAP2, and other signaling molecules. The chain is Lck-interacting transmembrane adapter 1 (Lime1) from Mus musculus (Mouse).